Reading from the N-terminus, the 236-residue chain is 2,3,4,5-tetrahydropyridine-2,6-dicarboxylate N-acetyltransferase (236 aa).

The protein belongs to the transferase hexapeptide repeat family. DapH subfamily.

The enzyme catalyses (S)-2,3,4,5-tetrahydrodipicolinate + acetyl-CoA + H2O = L-2-acetamido-6-oxoheptanedioate + CoA. The protein operates within amino-acid biosynthesis; L-lysine biosynthesis via DAP pathway; LL-2,6-diaminopimelate from (S)-tetrahydrodipicolinate (acetylase route): step 1/3. Its function is as follows. Catalyzes the transfer of an acetyl group from acetyl-CoA to tetrahydrodipicolinate. The chain is 2,3,4,5-tetrahydropyridine-2,6-dicarboxylate N-acetyltransferase from Lactobacillus helveticus (strain DPC 4571).